The primary structure comprises 2753 residues: Maltase-glucoamylase (2753 aa).

Residues 1-13 (MARKKLKKFTTLE) are Cytoplasmic-facing. A helical; Signal-anchor for type II membrane protein membrane pass occupies residues 14 to 34 (IVLSVLLLVLFIISIVLIVLL). At 35-2753 (AKESLKSTAP…FTSLTWISTL (2719 aa)) the chain is on the lumenal side. Residues 41–87 (STAPDPGTTGTPDPGTTGTPDPGTTGTTHARTTGPPDPGTTGTTPVS) are disordered. Residues 44–85 (PDPGTTGTPDPGTTGTPDPGTTGTTHARTTGPPDPGTTGTTP) are compositionally biased toward low complexity. The P-type 1 domain maps to 88–134 (AECPVVNELERINCIPDQPPTKATCDQRGCCWNPQGAVSVPWCYYSK). Intrachain disulfides connect C90/C118, C101/C117, and C112/C130. N-linked (GlcNAc...) asparagine glycosylation occurs at N135. D289 is an acarbose binding site. Residue N295 is glycosylated (N-linked (GlcNAc...) asparagine). The maltase stretch occupies residues 356 to 737 (PEQVVQEYLE…FRAHSRGDTV (382 aa)). Residue D413 participates in acarbose binding. A sulfotyrosine mark is found at Y416 and Y425. N457, N458, and N479 each carry an N-linked (GlcNAc...) asparagine glycan. D529 acts as the Nucleophile in catalysis. E532 is an active-site residue. Residues R612 and D628 each contribute to the acarbose site. C659 and C670 form a disulfide bridge. H686 is an acarbose binding site. Residues N707, N749, N827, N885, N912, N977, N989, and N1255 are each glycosylated (N-linked (GlcNAc...) asparagine). Residues 954–1000 (WSIKIRDEEKIDCYPDENGASAENCTARGCIWEASNSSGVPFCYFVN) enclose the P-type 2 domain. 2 disulfide bridges follow: C966-C983 and C978-C996. Positions 1221–1632 (TPELVTQQYT…MQKAHTEGVT (412 aa)) are glucoamylase. A Sulfotyrosine modification is found at Y1282. Residues N1323, N1364, and N1388 are each glycosylated (N-linked (GlcNAc...) asparagine). D1420 (nucleophile) is an active-site residue. E1423 is a catalytic residue. The active-site Proton donor is D1526. A P-type 3 domain is found at 1850–1896 (WSIKIRDEEKIDCYPDENGDSAENCTARGCIWEASNSSGVPFCYFVN). 2 disulfide bridges follow: C1862/C1879 and C1874/C1892. 4 N-linked (GlcNAc...) asparagine glycosylation sites follow: N2499, N2568, N2738, and N2743.

It belongs to the glycosyl hydrolase 31 family. Monomer. In terms of processing, N- and O-glycosylated. Does not undergo intracellular or extracellular proteolytic cleavage. Post-translationally, sulfated. As to expression, broadly expressed. Highly expressed in small intestine. Expressed in granulocytes.

It is found in the apical cell membrane. The enzyme catalyses Hydrolysis of terminal, non-reducing (1-&gt;4)-linked alpha-D-glucose residues with release of alpha-D-glucose.. It catalyses the reaction D-maltoheptaose + H2O = D-maltohexaose + alpha-D-glucose. The catalysed reaction is D-maltohexaose + H2O = D-maltopentaose + alpha-D-glucose. It carries out the reaction D-maltopentaose + H2O = D-maltotetraose + alpha-D-glucose. The enzyme catalyses D-maltotetraose + H2O = D-maltotriose + alpha-D-glucose. It catalyses the reaction D-maltotriose + H2O = D-maltose + alpha-D-glucose. The catalysed reaction is D-maltose + H2O = alpha-D-glucose + D-glucose. It carries out the reaction nigerose + H2O = alpha-D-glucose + D-glucose. The enzyme catalyses kojibiose + H2O = alpha-D-glucose + D-glucose. It catalyses the reaction isomaltose + H2O = alpha-D-glucose + D-glucose. The catalysed reaction is 6-O-alpha-D-glucopyranosyl-D-fructose + H2O = alpha-D-glucose + D-fructose. The protein operates within carbohydrate degradation. With respect to regulation, down-regulated at high oligomaltose concentration as it occurs during the mealtime. Down-regulated by anti-diabetic drug acarbose. In terms of biological role, alpha-(1,4) exo-glucosidase involved in breakdown of dietary starch oligosaccharides in small intestine. Cleaves the non-reducing alpha-(1,4)-linked glucose residue in linear dextrins with retention of anomeric center stereochemistry. Mainly hydrolyzes short length oligomaltoses having two to seven glucose residues. Can cleave alpha-(1,2), alpha-(1,3) and alpha-(1,6) glycosidic linkages with lower efficiency, whereas beta glycosidic linkages are usually not hydrolyzed. The protein is Maltase-glucoamylase of Homo sapiens (Human).